The following is a 198-amino-acid chain: Recombination protein RecR (198 aa).

Residues 57 to 72 (CTVCGHITDTDPCYIC) form a C4-type zinc finger. The Toprim domain maps to 80 to 175 (TTICVVQDPK…KVTRIAHGLP (96 aa)).

Belongs to the RecR family.

May play a role in DNA repair. It seems to be involved in an RecBC-independent recombinational process of DNA repair. It may act with RecF and RecO. In Geobacillus sp. (strain WCH70), this protein is Recombination protein RecR.